We begin with the raw amino-acid sequence, 186 residues long: Single-stranded DNA-binding protein 1 (186 aa).

Residues 1–108 enclose the SSB domain; it reads MDATVTVVGN…LEIDEIGPTL (108 aa). Residues 119-186 are disordered; that stretch reads TQAGHGVSPD…EDFDSDEVPF (68 aa). Positions 175–186 are enriched in acidic residues; that stretch reads SYEDFDSDEVPF.

Homotetramer.

This is Single-stranded DNA-binding protein 1 (ssb1) from Tropheryma whipplei (strain Twist) (Whipple's bacillus).